Here is a 365-residue protein sequence, read N- to C-terminus: Sulfate/thiosulfate import ATP-binding protein CysA (365 aa).

Residues 3-237 form the ABC transporter domain; that stretch reads IEIANIKKSF…PATRFVLEFM (235 aa). Residue 35 to 42 participates in ATP binding; that stretch reads GPSGSGKT.

It belongs to the ABC transporter superfamily. Sulfate/tungstate importer (TC 3.A.1.6) family. In terms of assembly, the complex is composed of two ATP-binding proteins (CysA), two transmembrane proteins (CysT and CysW) and a solute-binding protein (CysP).

Its subcellular location is the cell inner membrane. It catalyses the reaction sulfate(out) + ATP + H2O = sulfate(in) + ADP + phosphate + H(+). It carries out the reaction thiosulfate(out) + ATP + H2O = thiosulfate(in) + ADP + phosphate + H(+). Functionally, part of the ABC transporter complex CysAWTP involved in sulfate/thiosulfate import. Responsible for energy coupling to the transport system. This Escherichia coli (strain K12) protein is Sulfate/thiosulfate import ATP-binding protein CysA.